The chain runs to 193 residues: dTTP/UTP pyrophosphatase (193 aa).

Residue Asp75 is the Proton acceptor of the active site.

The protein belongs to the Maf family. YhdE subfamily. Requires a divalent metal cation as cofactor.

It is found in the cytoplasm. It carries out the reaction dTTP + H2O = dTMP + diphosphate + H(+). The enzyme catalyses UTP + H2O = UMP + diphosphate + H(+). Its function is as follows. Nucleoside triphosphate pyrophosphatase that hydrolyzes dTTP and UTP. May have a dual role in cell division arrest and in preventing the incorporation of modified nucleotides into cellular nucleic acids. This is dTTP/UTP pyrophosphatase from Koribacter versatilis (strain Ellin345).